A 250-amino-acid polypeptide reads, in one-letter code: LexA repressor (250 aa).

The segment covering Met-1–Pro-21 has biased composition (basic and acidic residues). The interval Met-1–Arg-33 is disordered. A DNA-binding region (H-T-H motif) is located at residues Val-54–Lys-74. Residues Ser-174 and Lys-211 each act as for autocatalytic cleavage activity in the active site.

This sequence belongs to the peptidase S24 family. Homodimer.

It catalyses the reaction Hydrolysis of Ala-|-Gly bond in repressor LexA.. Its function is as follows. Represses a number of genes involved in the response to DNA damage (SOS response), including recA and lexA. In the presence of single-stranded DNA, RecA interacts with LexA causing an autocatalytic cleavage which disrupts the DNA-binding part of LexA, leading to derepression of the SOS regulon and eventually DNA repair. The protein is LexA repressor of Parafrankia sp. (strain EAN1pec).